We begin with the raw amino-acid sequence, 30 residues long: Hainantoxin F7-28.42 (30 aa).

As to expression, expressed by the venom gland.

It localises to the secreted. This Cyriopagopus hainanus (Chinese bird spider) protein is Hainantoxin F7-28.42.